We begin with the raw amino-acid sequence, 190 residues long: Cypemycin cysteine dehydrogenase (decarboxylating) (190 aa).

Belongs to the HFCD (homooligomeric flavin containing Cys decarboxylase) superfamily.

It catalyses the reaction [cypemycin](1-18)-L-Cys-L-Leu-L-Val-L-Cys + A = C(3,19),S(21)-[cypemycin](1-18)-L-Ala-L-Leu-N-thioethenyl-L-valinamide + hydrogen sulfide + AH2 + CO2. Its function is as follows. Involved in the biosynthesis of the lanaridin cypemycin. The polypeptide is Cypemycin cysteine dehydrogenase (decarboxylating) (Streptomyces sp).